Here is an 81-residue protein sequence, read N- to C-terminus: Photosystem I iron-sulfur center (81 aa).

4Fe-4S ferredoxin-type domains are found at residues 2–31 and 39–68; these read SHSV…MIPW and IASA…VRVY. Residues Cys11, Cys14, Cys17, Cys21, Cys48, Cys51, Cys54, and Cys58 each coordinate [4Fe-4S] cluster.

As to quaternary structure, the eukaryotic PSI reaction center is composed of at least 11 subunits. It depends on [4Fe-4S] cluster as a cofactor.

The protein resides in the plastid. It localises to the chloroplast thylakoid membrane. The catalysed reaction is reduced [plastocyanin] + hnu + oxidized [2Fe-2S]-[ferredoxin] = oxidized [plastocyanin] + reduced [2Fe-2S]-[ferredoxin]. Functionally, apoprotein for the two 4Fe-4S centers FA and FB of photosystem I (PSI); essential for photochemical activity. FB is the terminal electron acceptor of PSI, donating electrons to ferredoxin. The C-terminus interacts with PsaA/B/D and helps assemble the protein into the PSI complex. Required for binding of PsaD and PsaE to PSI. PSI is a plastocyanin-ferredoxin oxidoreductase, converting photonic excitation into a charge separation, which transfers an electron from the donor P700 chlorophyll pair to the spectroscopically characterized acceptors A0, A1, FX, FA and FB in turn. This Acorus calamus (Sweet flag) protein is Photosystem I iron-sulfur center.